The chain runs to 200 residues: CASP-like protein 1U2 (200 aa).

Topologically, residues 1–33 (MAEPVIVVPRKGVYSDDSYHHHHRHHSFHSCTN) are cytoplasmic. The helical transmembrane segment at 34 to 54 (FLLRTLTAGATAAAVVVMLIS) threads the bilayer. Residues 55–77 (TQTSGTIYGYFRGRWRDYPAYKW) lie on the Extracellular side of the membrane. A helical membrane pass occupies residues 78 to 98 (LIIANAVVFVYSVMAAIVACF). The Cytoplasmic portion of the chain corresponds to 99-120 (SVIARRGPLSYSPSAWLTLLVD). A helical membrane pass occupies residues 121-141 (FLAASALISAASAALAVALLA). Topologically, residues 142–168 (RNGQDLQGTHYWPTVCNYVSKFCDYTQ) are extracellular. The chain crosses the membrane as a helical span at residues 169–189 (GAIIASFVGFGLLFLSTLLAA). The Cytoplasmic portion of the chain corresponds to 190–200 (SALYHLSHRRH).

This sequence belongs to the Casparian strip membrane proteins (CASP) family. As to quaternary structure, homodimer and heterodimers.

The protein localises to the cell membrane. In Physcomitrium patens (Spreading-leaved earth moss), this protein is CASP-like protein 1U2.